Reading from the N-terminus, the 650-residue chain is Epithelial sodium channel subunit beta (650 aa).

Topologically, residues 1 to 95 are cytoplasmic; sequence MLLHINPAYL…IICEGPKKKA (95 aa). The helical transmembrane segment at 96–116 threads the bilayer; that stretch reads MWFLLTLLFTALVCWQWGIFI. The Extracellular portion of the chain corresponds to 117–542; that stretch reads RTYLSWEVSV…GGQFGFWMGG (426 aa). 5 cysteine pairs are disulfide-bonded: C143–C317, C229–C234, C241–C248, C294–C301, and C406–C458. Residue N244 is glycosylated (N-linked (GlcNAc...) asparagine). N-linked (GlcNAc...) asparagine glycosylation is present at N305. A helical transmembrane segment spans residues 543–563; sequence SVLCLIEFGEIIIDFVWITII. Topologically, residues 564–650 are cytoplasmic; that stretch reads KLVALAKSLR…IESDSEGDAI (87 aa). Positions 600 to 650 are disordered; the sequence is FQPDTAPRSPNTGPYPNEQALPIPGTPPPNYDSLRLQPLDVIESDSEGDAI. The short motif at 626-630 is the PY motif; recruits WW domain-containing proteins and is thereby required for ubiquitination and inhibition of the channel by NEDD4 and NEDD4L element; the sequence is PPPNY. Positions 641 to 650 are enriched in acidic residues; the sequence is IESDSEGDAI. A phosphoserine mark is found at S643 and S645.

This sequence belongs to the amiloride-sensitive sodium channel (TC 1.A.6) family. SCNN1B subfamily. In terms of assembly, component of the heterotrimeric epithelial sodium channel (ENaC) composed of an alpha/SCNN1A, a beta/SCNN1B and a gamma/SCNN1G subunit. An additional delta/SCNN1D subunit can replace the alpha/SCNN1A subunit to form an alternative channel with specific properties. Interacts with WWP1 (via WW domains). Interacts with WWP2 (via WW domains); inhibits the channel. Interacts with the full-length immature form of PCSK9 (pro-PCSK9). Interacts (N-glycosylated) with BPIFA1; the interaction is direct and inhibits the proteolytic processing of SCNN1A and SCNN1G and the activation of ENaC. Post-translationally, ubiquitinated. Can be ubiquitinated at multiple sites and undergo monoubiquitination and polyubiquitination. Ubiquitination by NEDD4 or NEDD4L inhibits the ENaC channel through endocytosis, intracellular retention and degradation of its individual subunits. However, some studies could not confirm the ubiquitination of this subunit of the ENaC. Phosphorylated on serine and threonine residues. Aldosterone and insulin increase the basal level of phosphorylation. In terms of processing, N-glycosylated. N-glycosylation is required for interaction with BPIFA1.

The protein localises to the apical cell membrane. It localises to the cytoplasmic vesicle membrane. The enzyme catalyses Na(+)(in) = Na(+)(out). Originally identified and characterized by its inhibition by the diuretic drug amiloride. In terms of biological role, this is one of the three pore-forming subunits of the heterotrimeric epithelial sodium channel (ENaC), a critical regulator of sodium balance and fluid homeostasis. ENaC operates in epithelial tissues, where it mediates the electrodiffusion of sodium ions from extracellular fluid through the apical membrane of cells, with water following osmotically. It plays a key role in maintaining sodium homeostasis through electrogenic sodium reabsorption in the kidneys. Additionally, ENaC is essential for airway surface liquid homeostasis, which is crucial for proper mucus clearance. The sequence is that of Epithelial sodium channel subunit beta from Pan troglodytes (Chimpanzee).